A 67-amino-acid polypeptide reads, in one-letter code: Sec-independent protein translocase protein TatA (67 aa).

Residues 1-21 traverse the membrane as a helical segment; the sequence is MFGLGGQELVLILLIVLLLFG.

Belongs to the TatA/E family. As to quaternary structure, forms a complex with TatC.

Its subcellular location is the cell inner membrane. In terms of biological role, part of the twin-arginine translocation (Tat) system that transports large folded proteins containing a characteristic twin-arginine motif in their signal peptide across membranes. TatA could form the protein-conducting channel of the Tat system. In Chlorobaculum tepidum (strain ATCC 49652 / DSM 12025 / NBRC 103806 / TLS) (Chlorobium tepidum), this protein is Sec-independent protein translocase protein TatA.